The sequence spans 202 residues: MDKFVKLTGVAAPLPVVNVDTDMIIPKDYLKTIKRTGLGTGLFAEARYNEDGSPNQDFVLNKPAYQNAKILVAGDNFGCGSSREHAPWALLDFGIRCVISTSFADIFYNNCFKNGILPIKVSQEDLDKLMDDASRGSNAILTIDLENLEITGPDGGSLKFELDEFKRHCLLNGLDDIGLTLEKASAIDKFEKSNAAAHPWAA.

It belongs to the LeuD family. LeuD type 1 subfamily. In terms of assembly, heterodimer of LeuC and LeuD.

The enzyme catalyses (2R,3S)-3-isopropylmalate = (2S)-2-isopropylmalate. It participates in amino-acid biosynthesis; L-leucine biosynthesis; L-leucine from 3-methyl-2-oxobutanoate: step 2/4. Its function is as follows. Catalyzes the isomerization between 2-isopropylmalate and 3-isopropylmalate, via the formation of 2-isopropylmaleate. The polypeptide is 3-isopropylmalate dehydratase small subunit (Rhizobium rhizogenes (strain K84 / ATCC BAA-868) (Agrobacterium radiobacter)).